The following is a 213-amino-acid chain: Large ribosomal subunit protein uL1 (213 aa).

It belongs to the universal ribosomal protein uL1 family. In terms of assembly, part of the 50S ribosomal subunit.

Functionally, binds directly to 23S rRNA. Probably involved in E site tRNA release. In terms of biological role, protein L1 is also a translational repressor protein, it controls the translation of its operon by binding to its mRNA. The sequence is that of Large ribosomal subunit protein uL1 from Methanocella arvoryzae (strain DSM 22066 / NBRC 105507 / MRE50).